The chain runs to 106 residues: Nucleoid-associated protein RPB_0667 (106 aa).

It belongs to the YbaB/EbfC family. Homodimer.

Its subcellular location is the cytoplasm. The protein resides in the nucleoid. Functionally, binds to DNA and alters its conformation. May be involved in regulation of gene expression, nucleoid organization and DNA protection. This chain is Nucleoid-associated protein RPB_0667, found in Rhodopseudomonas palustris (strain HaA2).